The sequence spans 1348 residues: Phosphoribosylformylglycinamidine synthase (1348 aa).

ATP contacts are provided by residues 300–311 (GAATGAGGEIRD) and A701. Mg(2+) contacts are provided by D702, E741, N745, and D941. S943 contributes to the ATP binding site. In terms of domain architecture, Glutamine amidotransferase type-1 spans 1099–1348 (VAILREQGVN…MFRNARVWCG (250 aa)). Residue C1192 is the Nucleophile of the active site. Catalysis depends on residues H1313 and E1315.

In the N-terminal section; belongs to the FGAMS family. Monomer.

The protein localises to the cytoplasm. The enzyme catalyses N(2)-formyl-N(1)-(5-phospho-beta-D-ribosyl)glycinamide + L-glutamine + ATP + H2O = 2-formamido-N(1)-(5-O-phospho-beta-D-ribosyl)acetamidine + L-glutamate + ADP + phosphate + H(+). Its pathway is purine metabolism; IMP biosynthesis via de novo pathway; 5-amino-1-(5-phospho-D-ribosyl)imidazole from N(2)-formyl-N(1)-(5-phospho-D-ribosyl)glycinamide: step 1/2. In terms of biological role, phosphoribosylformylglycinamidine synthase involved in the purines biosynthetic pathway. Catalyzes the ATP-dependent conversion of formylglycinamide ribonucleotide (FGAR) and glutamine to yield formylglycinamidine ribonucleotide (FGAM) and glutamate. The sequence is that of Phosphoribosylformylglycinamidine synthase from Xanthomonas axonopodis pv. citri (strain 306).